The following is a 210-amino-acid chain: MTLHLQAAGLACERDWRLLFEQLDFELGAGDMLQISGPNGSGKTSLLRLLAGLMQPTAGQILLGGKPLAEQRHALASILLWIGHAAGIKDLLTAEENLTWLCALHQPASREAIWAALEAVGLRGFEDVPCHTLSAGQQRRVALARLHLACPPLWILDEPFTALDKQGVAQLEAHLAAHCEQGGTVVLTTHHTLERKPSGYRELNLGQWAA.

The ABC transporter domain maps to 3–205 (LHLQAAGLAC…KPSGYRELNL (203 aa)). 37–44 (GPNGSGKT) provides a ligand contact to ATP.

The protein belongs to the ABC transporter superfamily. CcmA exporter (TC 3.A.1.107) family. In terms of assembly, the complex is composed of two ATP-binding proteins (CcmA) and two transmembrane proteins (CcmB).

The protein localises to the cell inner membrane. It carries out the reaction heme b(in) + ATP + H2O = heme b(out) + ADP + phosphate + H(+). Its function is as follows. Part of the ABC transporter complex CcmAB involved in the biogenesis of c-type cytochromes; once thought to export heme, this seems not to be the case, but its exact role is uncertain. Responsible for energy coupling to the transport system. In Pseudomonas putida (strain GB-1), this protein is Cytochrome c biogenesis ATP-binding export protein CcmA.